A 153-amino-acid polypeptide reads, in one-letter code: Pheromone-binding protein Gp-9 (153 aa).

Positions 1-19 are cleaved as a signal peptide; it reads MKTFVLHIFIFALVAFASA. 3 disulfides stabilise this stretch: cysteine 37–cysteine 77, cysteine 73–cysteine 129, and cysteine 118–cysteine 138.

It belongs to the PBP/GOBP family. As to quaternary structure, homodimer.

The protein localises to the secreted. Colony queen number, a major feature of social organization, is associated with worker genotype for Gp-9. Colonies are headed by either a single reproductive queen (monogyne form) or multiple queens (polygyne form). Differences in worker Gp-9 genotypes between social forms may cause differences in workers' abilities to recognize queens and regulate their numbers. The chain is Pheromone-binding protein Gp-9 from Solenopsis interrupta (Fire ant).